A 211-amino-acid chain; its full sequence is Protein-methionine-sulfoxide reductase heme-binding subunit MsrQ (211 aa).

4 consecutive transmembrane segments (helical) span residues 17–37, 82–102, 116–136, and 153–173; these read LAGL…GLGA, LWCF…ELGV, PYLT…FTST, and FVYL…KIIS.

It belongs to the MsrQ family. In terms of assembly, heterodimer of a catalytic subunit (MsrP) and a heme-binding subunit (MsrQ). FMN serves as cofactor. The cofactor is heme b.

Its subcellular location is the cell inner membrane. Its function is as follows. Part of the MsrPQ system that repairs oxidized periplasmic proteins containing methionine sulfoxide residues (Met-O), using respiratory chain electrons. Thus protects these proteins from oxidative-stress damage caused by reactive species of oxygen and chlorine generated by the host defense mechanisms. MsrPQ is essential for the maintenance of envelope integrity under bleach stress, rescuing a wide series of structurally unrelated periplasmic proteins from methionine oxidation, including the primary periplasmic chaperone SurA and the lipoprotein Pal. MsrQ provides electrons for reduction to the reductase catalytic subunit MsrP, using the quinone pool of the respiratory chain. This chain is Protein-methionine-sulfoxide reductase heme-binding subunit MsrQ, found in Shigella boydii serotype 18 (strain CDC 3083-94 / BS512).